We begin with the raw amino-acid sequence, 165 residues long: Mid1-interacting protein 1-like (165 aa).

A disordered region spans residues 46-67 (DQESHASVSHNNNNNNEPSFPN).

The protein belongs to the SPOT14 family.

It is found in the nucleus. The protein resides in the cytoplasm. It localises to the cytoskeleton. In terms of biological role, involved in stabilization of microtubules. May play a role in the regulation of lipogenesis. This chain is Mid1-interacting protein 1-like, found in Danio rerio (Zebrafish).